We begin with the raw amino-acid sequence, 32 residues long: Phospholipase A2 (32 aa).

Residues Tyr16, Gly18, and Gly20 each contribute to the Ca(2+) site.

It depends on Ca(2+) as a cofactor. As to expression, expressed by the venom gland.

The protein resides in the secreted. It catalyses the reaction a 1,2-diacyl-sn-glycero-3-phosphocholine + H2O = a 1-acyl-sn-glycero-3-phosphocholine + a fatty acid + H(+). PLA2 catalyzes the calcium-dependent hydrolysis of the 2-acyl groups in 3-sn-phosphoglycerides. This is Phospholipase A2 from Micrurus lemniscatus (South American coral snake).